A 353-amino-acid polypeptide reads, in one-letter code: Protein MGF 360-13L (353 aa).

This sequence belongs to the asfivirus MGF 360 family.

Plays a role in virus cell tropism, and may be required for efficient virus replication in macrophages. The polypeptide is Protein MGF 360-13L (Ornithodoros (relapsing fever ticks)).